The primary structure comprises 422 residues: Serine--tRNA ligase (422 aa).

229-231 lines the L-serine pocket; the sequence is TAE. Residue 260 to 262 coordinates ATP; it reads RKE. Glutamate 283 is an L-serine binding site. 347–350 provides a ligand contact to ATP; it reads EISS. Serine 383 is an L-serine binding site.

This sequence belongs to the class-II aminoacyl-tRNA synthetase family. Type-1 seryl-tRNA synthetase subfamily. Homodimer. The tRNA molecule binds across the dimer.

Its subcellular location is the cytoplasm. It carries out the reaction tRNA(Ser) + L-serine + ATP = L-seryl-tRNA(Ser) + AMP + diphosphate + H(+). The catalysed reaction is tRNA(Sec) + L-serine + ATP = L-seryl-tRNA(Sec) + AMP + diphosphate + H(+). The protein operates within aminoacyl-tRNA biosynthesis; selenocysteinyl-tRNA(Sec) biosynthesis; L-seryl-tRNA(Sec) from L-serine and tRNA(Sec): step 1/1. Its function is as follows. Catalyzes the attachment of serine to tRNA(Ser). Is also able to aminoacylate tRNA(Sec) with serine, to form the misacylated tRNA L-seryl-tRNA(Sec), which will be further converted into selenocysteinyl-tRNA(Sec). The polypeptide is Serine--tRNA ligase (Geotalea uraniireducens (strain Rf4) (Geobacter uraniireducens)).